The following is a 524-amino-acid chain: Probable 1,3-beta-glucanosyltransferase GAS3 (524 aa).

An N-terminal signal peptide occupies residues 1-21; sequence MQLSKSILLAALAATPSLVNA. A disulfide bridge links Cys-78 with Cys-107. Residues Tyr-96, Asn-168, and Glu-169 each coordinate (1,3-beta-D-glucosyl)n. Glu-169 acts as the Proton donor in catalysis. N-linked (GlcNAc...) asparagine glycosylation is present at Asn-201. Positions 212 and 217 each coordinate (1,3-beta-D-glucosyl)n. Cystine bridges form between Cys-226–Cys-369 and Cys-254–Cys-286. Asn-269 is a glycosylation site (N-linked (GlcNAc...) asparagine). Glu-283 (nucleophile) is an active-site residue. Residue Tyr-315 participates in (1,3-beta-D-glucosyl)n binding. Asn-350, Asn-385, Asn-404, and Asn-422 each carry an N-linked (GlcNAc...) asparagine glycan. Residues 461-498 are disordered; the sequence is TSQSSSRSLTSSTSPSSSTGSSSSTGSSSASSSSKSKG. Gly-498 is lipidated: GPI-anchor amidated glycine. Residues 499 to 524 constitute a propeptide, removed in mature form; that stretch reads VGNIVNVSFSQSGYLALFAGLISALL.

It belongs to the glycosyl hydrolase 72 family. Post-translationally, the GPI-anchor is attached to the protein in the endoplasmic reticulum and serves to target the protein to the cell surface. There, the glucosamine-inositol phospholipid moiety is cleaved off and the GPI-modified mannoprotein is covalently attached via its lipidless GPI glycan remnant to the 1,6-beta-glucan of the outer cell wall layer. In terms of processing, N-glycosylated.

Its subcellular location is the secreted. It localises to the cell wall. It is found in the membrane. Splits internally a 1,3-beta-glucan molecule and transfers the newly generated reducing end (the donor) to the non-reducing end of another 1,3-beta-glucan molecule (the acceptor) forming a 1,3-beta linkage, resulting in the elongation of 1,3-beta-glucan chains in the cell wall. Involved in cell wall biosynthesis and morphogenesis. The polypeptide is Probable 1,3-beta-glucanosyltransferase GAS3 (GAS3) (Saccharomyces cerevisiae (strain ATCC 204508 / S288c) (Baker's yeast)).